The following is a 289-amino-acid chain: ATP synthase subunit gamma, mitochondrial (289 aa).

Belongs to the ATPase gamma chain family. In terms of assembly, F-type ATPases have 2 components, CF(1) - the catalytic core - and CF(0) - the membrane proton channel. CF(1) has five subunits: alpha(3), beta(3), gamma(1), delta(1), epsilon(1). CF(0) has three main subunits: a, b and c.

It localises to the mitochondrion. The protein resides in the mitochondrion inner membrane. Functionally, mitochondrial membrane ATP synthase (F(1)F(0) ATP synthase or Complex V) produces ATP from ADP in the presence of a proton gradient across the membrane which is generated by electron transport complexes of the respiratory chain. F-type ATPases consist of two structural domains, F(1) - containing the extramembraneous catalytic core, and F(0) - containing the membrane proton channel, linked together by a central stalk and a peripheral stalk. During catalysis, ATP synthesis in the catalytic domain of F(1) is coupled via a rotary mechanism of the central stalk subunits to proton translocation. Part of the complex F(1) domain and the central stalk which is part of the complex rotary element. The gamma subunit protrudes into the catalytic domain formed of alpha(3)beta(3). Rotation of the central stalk against the surrounding alpha(3)beta(3) subunits leads to hydrolysis of ATP in three separate catalytic sites on the beta subunits. In Kluyveromyces lactis (strain ATCC 8585 / CBS 2359 / DSM 70799 / NBRC 1267 / NRRL Y-1140 / WM37) (Yeast), this protein is ATP synthase subunit gamma, mitochondrial (ATP3).